A 144-amino-acid chain; its full sequence is Protein WAP-3 (144 aa).

The signal sequence occupies residues 1 to 21 (MRSRSFLVLVAVFLICETLVA). A disordered region spans residues 28-49 (RGPKGQGQDPVEGQDQDEGQGP). A region of interest (8 X 6 AA approximate tandem repeats) is located at residue glycine 34. 8 repeat units span residues 34–39 (GQDPVE), 40–45 (GQDQDE), 46–51 (GQGPVK), 58–63 (GQDLVK), 64–69 (GQDPVE), 70–75 (GQDPVK), 76–81 (AQLPDK), and 82–87 (VQDPVK). A disordered region spans residues 64 to 85 (GQDPVEGQDPVKAQLPDKVQDP). One can recognise a WAP domain in the interval 97-144 (LFPKPGVCPKIIFCPLVNPPIKCWRDSHCPGVKKCCPSLCGKGCVTPR). Intrachain disulfides connect cysteine 104/cysteine 132, cysteine 110/cysteine 136, cysteine 119/cysteine 131, and cysteine 125/cysteine 140.

As to expression, large intestine (relatively low levels).

This chain is Protein WAP-3, found in Sus scrofa (Pig).